A 31-amino-acid chain; its full sequence is Elongation factor Tu (31 aa).

Belongs to the GTP-binding elongation factor family. EF-Tu/EF-1A subfamily. Monomer.

The protein localises to the cytoplasm. Its function is as follows. This protein promotes the GTP-dependent binding of aminoacyl-tRNA to the A-site of ribosomes during protein biosynthesis. This Streptomyces laurentii protein is Elongation factor Tu (tuf).